A 158-amino-acid chain; its full sequence is NAD(P)H-quinone oxidoreductase subunit J, chloroplastic (158 aa).

The protein belongs to the complex I 30 kDa subunit family. As to quaternary structure, NDH is composed of at least 16 different subunits, 5 of which are encoded in the nucleus.

The protein resides in the plastid. It localises to the chloroplast thylakoid membrane. It catalyses the reaction a plastoquinone + NADH + (n+1) H(+)(in) = a plastoquinol + NAD(+) + n H(+)(out). The catalysed reaction is a plastoquinone + NADPH + (n+1) H(+)(in) = a plastoquinol + NADP(+) + n H(+)(out). Functionally, NDH shuttles electrons from NAD(P)H:plastoquinone, via FMN and iron-sulfur (Fe-S) centers, to quinones in the photosynthetic chain and possibly in a chloroplast respiratory chain. The immediate electron acceptor for the enzyme in this species is believed to be plastoquinone. Couples the redox reaction to proton translocation, and thus conserves the redox energy in a proton gradient. This chain is NAD(P)H-quinone oxidoreductase subunit J, chloroplastic, found in Arabis hirsuta (Hairy rock-cress).